Consider the following 287-residue polypeptide: AA9 family lytic polysaccharide monooxygenase C (287 aa).

An N-terminal signal peptide occupies residues 1 to 16; that stretch reads MKSVLVALATATAVSA. H17 contributes to the Cu(2+) binding site. The N-linked (GlcNAc...) asparagine glycan is linked to N22. 2 disulfide bridges follow: C77-C230 and C200-C284. H114 is a binding site for Cu(2+). The O2 site is built by H216 and Q225. Residue Y227 participates in Cu(2+) binding.

This sequence belongs to the polysaccharide monooxygenase AA9 family. It depends on Cu(2+) as a cofactor.

It is found in the secreted. It carries out the reaction [(1-&gt;4)-beta-D-glucosyl]n+m + reduced acceptor + O2 = 4-dehydro-beta-D-glucosyl-[(1-&gt;4)-beta-D-glucosyl]n-1 + [(1-&gt;4)-beta-D-glucosyl]m + acceptor + H2O.. Lytic polysaccharide monooxygenase (LPMO) that depolymerizes crystalline and amorphous polysaccharides via the oxidation of scissile alpha- or beta-(1-4)-glycosidic bonds, yielding C1 or C4 oxidation products. Catalysis by LPMOs requires the reduction of the active-site copper from Cu(II) to Cu(I) by a reducing agent and H(2)O(2) or O(2) as a cosubstrate. This is AA9 family lytic polysaccharide monooxygenase C from Podospora anserina (strain S / ATCC MYA-4624 / DSM 980 / FGSC 10383) (Pleurage anserina).